Here is a 597-residue protein sequence, read N- to C-terminus: Sialic acid-binding Ig-like lectin 12 (597 aa).

The signal sequence occupies residues 1-20 (MLLLLLLLLLPPLLCGRVGA). Ig-like V-type domains lie at 21-144 (KEQK…VNVT) and 145-271 (ASQD…VHVT). The Extracellular portion of the chain corresponds to 21-483 (KEQKDYLLTM…RPISGVTLGA (463 aa)). Cysteines 46 and 106 form a disulfide. Residues Asn-142, Asn-181, Asn-232, and Asn-292 are each glycosylated (N-linked (GlcNAc...) asparagine). Disulfide bonds link Cys-168–Cys-301, Cys-173–Cys-233, and Cys-295–Cys-344. The 84-residue stretch at 277 to 360 (PTFSIPGTLE…AGVTTTRAVR (84 aa)) folds into the Ig-like C2-type 1 domain. Residues Asn-362, Asn-369, and Asn-387 are each glycosylated (N-linked (GlcNAc...) asparagine). The Ig-like C2-type 2 domain maps to 367–464 (PQNLTMTVFQ…GSQHISLSLS (98 aa)). Residues Cys-403 and Cys-448 are joined by a disulfide bond. The chain crosses the membrane as a helical span at residues 484–504 (VGGAGATALVFLSFCIIFVVV). The Cytoplasmic portion of the chain corresponds to 505–597 (RSCRKKSARP…YEYSEINILK (93 aa)). A disordered region spans residues 514–558 (PAVGVGDTGMEDTNAVRGSASQGPLIESPADDSPPHHAPPALATP). Residues 565-570 (IQYASL) carry the ITIM motif motif. Residues Tyr-567 and Tyr-590 each carry the phosphotyrosine modification. The SLAM-like motif motif lies at 588–593 (YEYSEI).

This sequence belongs to the immunoglobulin superfamily. SIGLEC (sialic acid binding Ig-like lectin) family.

It localises to the membrane. Functionally, putative adhesion molecule that mediates sialic-acid dependent binding to cells. The sialic acid recognition site may be masked by cis interactions with sialic acids on the same cell surface. The protein is Sialic acid-binding Ig-like lectin 12 (SIGLEC12) of Pan troglodytes (Chimpanzee).